The chain runs to 113 residues: MDMKFWTTKEYKKIKRDFIIRNFAFGFCYFLFLISFIMCIVCFIISINFEVEIILVILFPFLLLILSVWNLFDLIMEHISEIKRFKVTVLKKQIEELEGKMLRGLRVGVDKIE.

The next 2 membrane-spanning stretches (helical) occupy residues 25-45 and 49-69; these read FGFC…CFII and FEVE…LSVW.

The protein resides in the host membrane. This is an uncharacterized protein from Spiroplasma citri (SpV1).